Reading from the N-terminus, the 115-residue chain is Large ribosomal subunit protein bL19 (115 aa).

The protein belongs to the bacterial ribosomal protein bL19 family.

Its function is as follows. This protein is located at the 30S-50S ribosomal subunit interface and may play a role in the structure and function of the aminoacyl-tRNA binding site. This chain is Large ribosomal subunit protein bL19, found in Desulforapulum autotrophicum (strain ATCC 43914 / DSM 3382 / VKM B-1955 / HRM2) (Desulfobacterium autotrophicum).